Here is a 187-residue protein sequence, read N- to C-terminus: UPF0301 protein YqgE (187 aa).

It belongs to the UPF0301 (AlgH) family.

In Salmonella choleraesuis (strain SC-B67), this protein is UPF0301 protein YqgE.